Reading from the N-terminus, the 527-residue chain is Catalase (527 aa).

The span at 1-22 (MADNRDPASDQMKHWKEQRAAQ) shows a compositional bias: basic and acidic residues. The disordered stretch occupies residues 1-42 (MADNRDPASDQMKHWKEQRAAQKPDVLTTGGGNPVGDKLNSL). Alanine 2 bears the Blocked amino end (Ala); alternate mark. Alanine 2 is subject to N-acetylalanine; alternate. At serine 9 the chain carries Phosphoserine. Residue lysine 13 is modified to N6-succinyllysine. Catalysis depends on residues histidine 75 and asparagine 148. Positions 194, 198, 201, 203, 213, and 215 each coordinate NADP(+). N6-succinyllysine is present on lysine 221. Lysine 233 carries the post-translational modification N6-acetyllysine. Positions 237, 303, and 305 each coordinate NADP(+). A heme-binding site is contributed by tyrosine 358. Phosphoserine is present on residues serine 417 and serine 434. The NADP(+) site is built by glutamine 442, threonine 445, and phenylalanine 446. 2 positions are modified to N6-acetyllysine; alternate: lysine 449 and lysine 480. N6-succinyllysine; alternate occurs at positions 449 and 480. N6-acetyllysine is present on lysine 499. The residue at position 511 (threonine 511) is a Phosphothreonine. Position 517 is a phosphoserine (serine 517). Positions 524 to 527 (KANL) match the Microbody targeting signal; atypical motif.

Belongs to the catalase family. In terms of assembly, homotetramer. Interacts (via microbody targeting signal) with PEX5, monomeric form interacts with PEX5, leading to its translocation into peroxisomes. It depends on heme as a cofactor. NADP(+) is required as a cofactor.

Its subcellular location is the peroxisome matrix. The catalysed reaction is 2 H2O2 = O2 + 2 H2O. Functionally, catalyzes the degradation of hydrogen peroxide (H(2)O(2)) generated by peroxisomal oxidases to water and oxygen, thereby protecting cells from the toxic effects of hydrogen peroxide. Promotes growth of cells including T-cells, B-cells, myeloid leukemia cells, melanoma cells, mastocytoma cells and normal and transformed fibroblast cells. The polypeptide is Catalase (CAT) (Bos taurus (Bovine)).